A 419-amino-acid chain; its full sequence is L-cysteine:1D-myo-inositol 2-amino-2-deoxy-alpha-D-glucopyranoside ligase (419 aa).

The segment at 1–20 is disordered; sequence MRSWSVPEVPALPGRGPRVH. Zn(2+) is bound at residue Cys44. L-cysteinyl-5'-AMP is bound by residues 44 to 47, Thr59, and 82 to 84; these read CGIT and NVT. Positions 46 to 56 match the 'HIGH' region motif; the sequence is ITPYDATHLGH. Residues 191–196 carry the 'ERGGDP' region motif; the sequence is ERGGDP. Trp232 lines the L-cysteinyl-5'-AMP pocket. Cys236 contacts Zn(2+). Residue 254-256 participates in L-cysteinyl-5'-AMP binding; it reads GSD. His261 is a Zn(2+) binding site. Val289 serves as a coordination point for L-cysteinyl-5'-AMP. The short motif at 295–299 is the 'KMSKS' region element; it reads KMSKS.

The protein belongs to the class-I aminoacyl-tRNA synthetase family. MshC subfamily. As to quaternary structure, monomer. Zn(2+) is required as a cofactor.

It catalyses the reaction 1D-myo-inositol 2-amino-2-deoxy-alpha-D-glucopyranoside + L-cysteine + ATP = 1D-myo-inositol 2-(L-cysteinylamino)-2-deoxy-alpha-D-glucopyranoside + AMP + diphosphate + H(+). Catalyzes the ATP-dependent condensation of GlcN-Ins and L-cysteine to form L-Cys-GlcN-Ins. This is L-cysteine:1D-myo-inositol 2-amino-2-deoxy-alpha-D-glucopyranoside ligase from Kineococcus radiotolerans (strain ATCC BAA-149 / DSM 14245 / SRS30216).